We begin with the raw amino-acid sequence, 708 residues long: Pre-mRNA-splicing factor SPP382 (708 aa).

A G-patch domain is found at 61-108 (TYGIGAKLLSSMGYVAGKGLGKDGSGITTPIETQSRPMHNAGLGMFSN).

Component of the NTR complex (NTC-related complex), composed of NTR1, NTR2 and PRP43. Interacts with CLF1 and NTR2. Interacts with PRP43 and PRP45.

It localises to the cytoplasm. The protein resides in the nucleus. In terms of biological role, involved in pre-mRNA splicing and spliceosome disassembly. Promotes release of excised lariat intron from the spliceosome by acting as a receptor for PRP43. This targeting of PRP43 leads to disassembly of the spliceosome with the separation of the U2, U5, U6 snRNPs and the NTC complex. This chain is Pre-mRNA-splicing factor SPP382 (SPP382), found in Saccharomyces cerevisiae (strain ATCC 204508 / S288c) (Baker's yeast).